The sequence spans 904 residues: E3 ubiquitin-protein ligase ZNF598 (904 aa).

The RING-type zinc-finger motif lies at 29–69 (CVLCCGDLEATALGRCDHPVCYRCSTKMRVLCEQRYCAVCR). The C2H2-type zinc finger occupies 187–210 (PLCKFCDERYLDNDELLKHLRRDH). Phosphotyrosine is present on Y306. 2 disordered regions span residues 312 to 469 (YSRQ…GLAL) and 490 to 656 (VSSV…LPRP). Over residues 346–358 (AAAVRASVAAQQQ) the composition is skewed to low complexity. Residues 359-388 (EEARRSEDQEEGGRPKKEEAAARGPEDPRG) are compositionally biased toward basic and acidic residues. The span at 404-416 (ETSTNGPVSQEAF) shows a compositional bias: polar residues. Residues 418-431 (VTGPAAPGCVGVPG) show a composition bias toward low complexity. Phosphoserine occurs at positions 428, 431, and 437. Composition is skewed to low complexity over residues 447 to 461 (SLSASTSSSCSTAAT) and 502 to 513 (SLVSAWNSSSSS). Polar residues predominate over residues 521 to 531 (LSAQATGSGQP). The segment covering 534-543 (KAGKGSRGGR) has biased composition (basic residues). Polar residues predominate over residues 564 to 584 (LLSTRPTGSVSSTLGLASIQP).

It belongs to the ZNF598/HEL2 family. As to quaternary structure, interacts with the E2 ubiquitin-conjugating enzyme UBE2D3. Component of the 4EHP-GYF2 complex, at least composed of EIF4E2, GIGYF2 and ZNF598.

The protein localises to the cytoplasm. It is found in the cytosol. The catalysed reaction is S-ubiquitinyl-[E2 ubiquitin-conjugating enzyme]-L-cysteine + [acceptor protein]-L-lysine = [E2 ubiquitin-conjugating enzyme]-L-cysteine + N(6)-ubiquitinyl-[acceptor protein]-L-lysine.. The protein operates within protein modification; protein ubiquitination. Its function is as follows. E3 ubiquitin-protein ligase that plays a key role in the ribosome quality control (RQC), a pathway that takes place when a ribosome has stalled during translation, leading to degradation of nascent peptide chains. ZNF598 is activated when ribosomes are stalled within an mRNA following translation of prematurely polyadenylated mRNAs. Acts as a ribosome collision sensor: specifically recognizes and binds collided di-ribosome, which arises when a trailing ribosome encounters a slower leading ribosome, leading to terminally arrest translation. Following binding to colliding ribosomes, mediates monoubiquitination of 40S ribosomal proteins RPS10/eS10 and RPS3/uS3, and 'Lys-63'-linked polyubiquitination of RPS20/uS10. Polyubiquitination of RPS20/uS10 promotes recruitment of the RQT (ribosome quality control trigger) complex, which drives the disassembly of stalled ribosomes, followed by degradation of nascent peptides. E3 ubiquitin-protein ligase activity is dependent on the E2 ubiquitin-conjugating enzyme UBE2D3. Also acts as an adapter that recruits the 4EHP-GYF2 complex to mRNAs. Independently of its role in RQC, may also act as a negative regulator of interferon-stimulated gene (ISG) expression. In terms of biological role, (Microbial infection) Required for poxvirus protein synthesis by mediating ubiquitination of RPS10/eS10 and RPS20/uS10. Poxvirus encoding mRNAs contain unusual 5' poly(A) leaders and ZNF598 is required for their translational efficiency, possibly via its ability to suppress readthrough or sliding on shorter poly(A) tracts. In Homo sapiens (Human), this protein is E3 ubiquitin-protein ligase ZNF598.